Reading from the N-terminus, the 263-residue chain is Eukaryotic translation initiation factor 3 subunit J-B (263 aa).

Acidic residues-rich tracts occupy residues 1-13 and 30-50; these read MADS…DNFE and EGED…EEKE. 2 disordered regions span residues 1 to 75 and 214 to 235; these read MADS…DKIK and KQKQ…VPGG. Residues 30 to 127 are a coiled coil; that stretch reads EGEDEEEDVK…EADMELAREA (98 aa). Basic and acidic residues predominate over residues 51 to 75; sequence EEKKVEQKIAEVKPPEKKKLSDKIK.

This sequence belongs to the eIF-3 subunit J family. As to quaternary structure, component of the eukaryotic translation initiation factor 3 (eIF-3) complex, which is composed of 13 subunits: eif3a, eif3b, eif3c, eif3d, eif3e, eif3f, eif3g, eif3h, eif3i, eif3j, eif3k, eif3l and eif3m.

Its subcellular location is the cytoplasm. In terms of biological role, component of the eukaryotic translation initiation factor 3 (eIF-3) complex, which is involved in protein synthesis of a specialized repertoire of mRNAs and, together with other initiation factors, stimulates binding of mRNA and methionyl-tRNAi to the 40S ribosome. The eIF-3 complex specifically targets and initiates translation of a subset of mRNAs involved in cell proliferation. This chain is Eukaryotic translation initiation factor 3 subunit J-B (eif3jb), found in Danio rerio (Zebrafish).